The primary structure comprises 154 residues: Urease accessory protein UreE (154 aa).

It belongs to the UreE family.

The protein resides in the cytoplasm. Involved in urease metallocenter assembly. Binds nickel. Probably functions as a nickel donor during metallocenter assembly. The sequence is that of Urease accessory protein UreE from Escherichia coli O157:H7.